A 185-amino-acid polypeptide reads, in one-letter code: Ribosome-recycling factor (185 aa).

It belongs to the RRF family.

Its subcellular location is the cytoplasm. Responsible for the release of ribosomes from messenger RNA at the termination of protein biosynthesis. May increase the efficiency of translation by recycling ribosomes from one round of translation to another. The protein is Ribosome-recycling factor of Nocardioides sp. (strain ATCC BAA-499 / JS614).